Reading from the N-terminus, the 721-residue chain is Vacuolar transporter chaperone complex subunit 4 (721 aa).

The SPX domain occupies 1–146; sequence MKFGQLLKET…GWILKPVFAA (146 aa). The Cytoplasmic portion of the chain corresponds to 1-631; that stretch reads MKFGQLLKET…KTYFALERTY (631 aa). ATP contacts are provided by K198, R262, R264, K279, K292, Y357, and R359. A Mn(2+)-binding site is contributed by E421. Residue K453 is part of the active site. Polar residues-rich tracts occupy residues 490-513 and 529-547; these read QGRS…SENT and IGSS…SDSF. Residues 490–547 form a disordered region; it reads QGRSQSGTHSSSVSANVLTDSENTPIHADGDNYVDEESRIGSSSTRNDNSTFQTSDSF. S495 bears the Phosphoserine mark. T497 bears the Phosphothreonine mark. Residue S501 is modified to Phosphoserine. Phosphothreonine is present on T534. S546 carries the phosphoserine modification. The helical transmembrane segment at 632-652 threads the bilayer; that stretch reads LDYLRYSILMGSIGITLFSFA. Residues 653-657 are Vacuolar-facing; that stretch reads KTRSG. Residues 658 to 678 form a helical membrane-spanning segment; the sequence is ILGAASFTLVALFAIFYSTFL. Topologically, residues 679–697 are cytoplasmic; it reads YLWRAVNIAKHNAVRYDDR. The chain crosses the membrane as a helical span at residues 698–718; that stretch reads FGPTAICVITFAAISANVILN. Over 719–721 the chain is Vacuolar; the sequence is FNA.

It belongs to the VTC4 family. As to quaternary structure, the VTC core complex is an integral membrane heterooligomer composed of at least the catalytic subunit vtc4 and the accessory subunits vtc1 and vtc2. vtc1 is a small membrane protein without hydrophilic domain. Vtc2 and vtc4 are related and have 2 hydrophilic domains that face the cytosol, an N-terminal SPX domain and the central core domain. The central core in vtc4 is the catalytic domain. It depends on Mn(2+) as a cofactor.

It is found in the vacuole membrane. The catalysed reaction is [phosphate](n) + ATP = [phosphate](n+1) + ADP. Activity of the enzyme is Mn(2+)-dependent and enhanced in the presence of pyrophosphate (PPi). In terms of biological role, catalytic subunit of the vacuolar transporter chaperone (VTC) complex. The VTC complex acts as a vacuolar polyphosphate polymerase that catalyzes the synthesis of inorganic polyphosphate (polyP) via transfer of phosphate from ATP to a growing polyP chain, releasing ADP. VTC exposes its catalytic domain vtc4 to the cytosol, where the growing polyP chain winds through a tunnel-shaped pocket, integrating cytoplasmic polymer synthesis with polyP membrane translocation. The VTC complex carries 9 vacuolar transmembrane domains, which are likely to constitute the translocation channel into the organelle lumen. PolyP synthesis is tightly coupled to its transport into the vacuole lumen, in order to avoid otherwise toxic intermediates in the cytosol, and it depends on the proton gradient across the membrane, formed by V-ATPase. The VTC complex also plays a role in vacuolar membrane fusion. This Schizosaccharomyces pombe (strain 972 / ATCC 24843) (Fission yeast) protein is Vacuolar transporter chaperone complex subunit 4 (vtc4).